The sequence spans 210 residues: Probable GTP-binding protein EngB (210 aa).

Positions 25–199 (TGIEVAFAGR…RQKLDTWFSE (175 aa)) constitute an EngB-type G domain. GTP contacts are provided by residues 33–40 (GRSNAGKS), 60–64 (GRTQL), 78–81 (DLPG), 145–148 (TKTD), and 178–180 (FSS). The Mg(2+) site is built by S40 and T62.

It belongs to the TRAFAC class TrmE-Era-EngA-EngB-Septin-like GTPase superfamily. EngB GTPase family. Mg(2+) is required as a cofactor.

Functionally, necessary for normal cell division and for the maintenance of normal septation. The protein is Probable GTP-binding protein EngB of Escherichia coli O6:K15:H31 (strain 536 / UPEC).